We begin with the raw amino-acid sequence, 764 residues long: uncharacterized protein (764 aa).

Topologically, residues 1–646 (MKEENGFAGF…LTKLYTFPFT (646 aa)) are lumenal. Residues 22–173 (LNDTAPTKSQ…SAITAPSRKV (152 aa)) form a disordered region. N23 carries N-linked (GlcNAc...) asparagine glycosylation. 2 stretches are compositionally biased toward polar residues: residues 25–41 (TAPT…NNEG) and 61–82 (SEAS…QSPS). S80 is subject to Phosphoserine. A compositionally biased stretch (acidic residues) spans 98-113 (ENQENEADEAENEETS). A glycan (N-linked (GlcNAc...) asparagine) is linked at N118. Residues 118–145 (NHTENTEEIAEESRPLERTHSGSNHHEA) show a composition bias toward basic and acidic residues. A compositionally biased stretch (polar residues) spans 158 to 173 (NTLSQGSAITAPSRKV). The region spanning 197 to 264 (RDFHRIFKVL…TEIVSVEKKS (68 aa)) is the GRAM domain. N-linked (GlcNAc...) asparagine glycosylation is found at N240 and N330. Residues 320–406 (ASGNHHSGSS…DGNSVKKMNE (87 aa)) form a disordered region. Residues 321-330 (SGNHHSGSSN) are compositionally biased toward low complexity. A compositionally biased stretch (polar residues) spans 331–340 (QSINADSSAG). Over residues 352 to 371 (ANDESSEDDDEDNNTDEANE) the composition is skewed to acidic residues. N364 and N376 each carry an N-linked (GlcNAc...) asparagine glycan. The segment covering 389–399 (HSDNVVLSDGN) has biased composition (polar residues). The VASt domain occupies 432–598 (LAHVLCSDVV…AFENYKVSPK (167 aa)). N-linked (GlcNAc...) asparagine glycans are attached at residues N442 and N554. A compositionally biased stretch (basic residues) spans 598–613 (KGRRKKITKHTKKKNK). The interval 598–626 (KGRRKKITKHTKKKNKHASETSVAPEKVD) is disordered. N627 carries an N-linked (GlcNAc...) asparagine glycan. Residues 647–667 (IITWLMHPTHLLLVVMFSMLV) form a helical membrane-spanning segment. The Cytoplasmic segment spans residues 668-764 (LQWWYMQQIL…LRKLEASGYI (97 aa)).

Belongs to the YSP2 family.

The protein localises to the membrane. This is an uncharacterized protein from Schizosaccharomyces pombe (strain 972 / ATCC 24843) (Fission yeast).